Reading from the N-terminus, the 151-residue chain is Guanylate kinase homolog (151 aa).

In terms of domain architecture, Guanylate kinase-like spans 1 to 141 (MEREGVDYHY…AYSKLIQILQ (141 aa)).

This sequence belongs to the guanylate kinase family.

In Bos taurus (Bovine), this protein is Guanylate kinase homolog.